A 628-amino-acid polypeptide reads, in one-letter code: Forkhead box protein O (628 aa).

Disordered regions lie at residues 39-77 (RARSNTWPCPRPENFVEPTDELDSTKASNQQLAPGDSQQ), 182-205 (KSVRRRAASMETSRYEKRRGRAKK), 217-269 (GLND…RLSP), 316-359 (QQQG…APGY), and 389-415 (NSVTTTMSPAYPNSEPSSDSLNTYSNV). At threonine 44 the chain carries Phosphothreonine; by PKB/AKT1. Over residues 63–77 (TKASNQQLAPGDSQQ) the composition is skewed to polar residues. Serine 75 carries the post-translational modification Phosphoserine. The segment at residues 95 to 201 (WGNLSYADLI…ETSRYEKRRG (107 aa)) is a DNA-binding region (fork-head). Serine 190 is modified (phosphoserine; by PKB/AKT1). Composition is skewed to polar residues over residues 221–230 (ATPSPSSSVS) and 256–265 (RASSNASSCG). A Phosphoserine; by PKB/AKT1 modification is found at serine 259. Residues serine 262, serine 263, and serine 268 each carry the phosphoserine modification. A compositionally biased stretch (pro residues) spans 328–337 (SQPPPPPYQP). Positions 338–351 (PQHQQAQQQQSPYA) are enriched in low complexity. A compositionally biased stretch (polar residues) spans 402-414 (SEPSSDSLNTYSN).

In terms of assembly, interacts with melt.

It is found in the cytoplasm. The protein localises to the nucleus. Its function is as follows. Transcription factor involved in the regulation of the insulin signaling pathway. Consistently activates both the downstream target Thor\d4EBP and the feedback control target InR. Involved in negative regulation of the cell cycle, modulating cell growth and proliferation. In response to cellular stresses, such as nutrient deprivation or increased levels of reactive oxygen species, foxo is activated and inhibits growth through the action of target genes such as Thor. Foxo activated in the adult fat body can regulate lifespan in adults; an insulin peptide itself may function as one secondary messenger of insulin-regulated aging. Also regulates Lip4, homolog of human acid lipases, thereby acting as a key modulator of lipid metabolism by insulin signaling and integrates insulin responses to glucose and lipid homeostasis. In Drosophila yakuba (Fruit fly), this protein is Forkhead box protein O.